The following is a 390-amino-acid chain: S-adenosylmethionine synthase 1 (390 aa).

Glutamate 9 is a Mg(2+) binding site. Histidine 15 is a binding site for ATP. Glutamate 43 provides a ligand contact to K(+). Glutamate 56 and glutamine 99 together coordinate L-methionine. ATP is bound by residues 167–169, 235–238, aspartate 246, 252–253, alanine 269, lysine 273, and lysine 277; these read DGK, SGRF, and RK. Aspartate 246 contacts L-methionine. Lysine 277 serves as a coordination point for L-methionine.

This sequence belongs to the AdoMet synthase family. Homotetramer. Requires Mn(2+) as cofactor. The cofactor is Mg(2+). Co(2+) is required as a cofactor. It depends on K(+) as a cofactor.

It is found in the cytoplasm. The enzyme catalyses L-methionine + ATP + H2O = S-adenosyl-L-methionine + phosphate + diphosphate. Its pathway is amino-acid biosynthesis; S-adenosyl-L-methionine biosynthesis; S-adenosyl-L-methionine from L-methionine: step 1/1. In terms of biological role, catalyzes the formation of S-adenosylmethionine from methionine and ATP. The reaction comprises two steps that are both catalyzed by the same enzyme: formation of S-adenosylmethionine (AdoMet) and triphosphate, and subsequent hydrolysis of the triphosphate. In Nicotiana tabacum (Common tobacco), this protein is S-adenosylmethionine synthase 1 (SAMS1).